Reading from the N-terminus, the 240-residue chain is Dihydromonapterin reductase (240 aa).

Residue Y152 is the Proton acceptor of the active site.

The protein belongs to the short-chain dehydrogenases/reductases (SDR) family. FolM subfamily.

The catalysed reaction is (6S)-5,6,7,8-tetrahydrofolate + NADP(+) = 7,8-dihydrofolate + NADPH + H(+). It catalyses the reaction 7,8-dihydromonapterin + NADPH + H(+) = 5,6,7,8-tetrahydromonapterin + NADP(+). Functionally, catalyzes the reduction of dihydromonapterin to tetrahydromonapterin. Also has lower activity with dihydrofolate. In Escherichia coli O6:H1 (strain CFT073 / ATCC 700928 / UPEC), this protein is Dihydromonapterin reductase (folM).